Here is a 229-residue protein sequence, read N- to C-terminus: Large ribosomal subunit protein uL1 (229 aa).

The protein belongs to the universal ribosomal protein uL1 family. As to quaternary structure, part of the 50S ribosomal subunit.

Functionally, binds directly to 23S rRNA. The L1 stalk is quite mobile in the ribosome, and is involved in E site tRNA release. Its function is as follows. Protein L1 is also a translational repressor protein, it controls the translation of the L11 operon by binding to its mRNA. This is Large ribosomal subunit protein uL1 from Streptococcus equi subsp. zooepidemicus (strain MGCS10565).